Here is a 417-residue protein sequence, read N- to C-terminus: Calreticulin (417 aa).

The N-terminal stretch at 1–17 is a signal peptide; it reads MLLSVPLLLGLLGLAVA. Residues 18–197 are N-domain; it reads EPAVYFKEQF…NSQVESGSLE (180 aa). Residue Gln26 coordinates Ca(2+). Lys48 is modified (N6-acetyllysine). Ca(2+) contacts are provided by Lys62 and Lys64. Residue Lys64 is modified to N6-(2-hydroxyisobutyryl)lysine. A disulfide bridge connects residues Cys105 and Cys137. An alpha-D-glucoside-binding residues include Tyr109, Lys111, Tyr128, and Asp135. Position 159 is an N6-acetyllysine (Lys159). A 1-1 repeat occupies 191–202; it reads VESGSLEDDWDF. Residues 191-255 are 4 X approximate repeats; the sequence is VESGSLEDDW…DAKKPEDWDE (65 aa). A disordered region spans residues 193 to 278; sequence SGSLEDDWDF…PEYKGEWKPR (86 aa). A P-domain region spans residues 198–308; the sequence is DDWDFLPPKK…YSPDPSIYAY (111 aa). The span at 207 to 251 shows a compositional bias: basic and acidic residues; the sequence is KIKDPDASKPEDWDERAKIDDPTDSKPEDWDKPEHIPDPDAKKPE. Lys209 is subject to N6-acetyllysine. 6 tandem repeats follow at residues 210-221, 227-238, 244-255, 259-269, 273-283, and 287-297. The tract at residues 237–270 is interaction with PPIB; it reads DKPEHIPDPDAKKPEDWDEEMDGEWEPPVIQNPE. Residues 252 to 261 are compositionally biased toward acidic residues; that stretch reads DWDEEMDGEW. A 3 X approximate repeats region spans residues 259-297; that stretch reads GEWEPPVIQNPEYKGEWKPRQIDNPDYKGTWIHPEIDNP. The C-domain stretch occupies residues 309–417; it reads DNFGVLGLDL…DVPGQAKDEL (109 aa). Asp317 contacts an alpha-D-glucoside. Asp328 is a binding site for Ca(2+). Asn344 is a glycosylation site (N-linked (GlcNAc...) asparagine). The disordered stretch occupies residues 350–417; it reads TKAAEKQMKD…DVPGQAKDEL (68 aa). Over residues 352 to 379 the composition is skewed to basic and acidic residues; it reads AAEKQMKDKQDEEQRLKEEEEDKKRKEE. Residues 380–409 show a composition bias toward acidic residues; that stretch reads EEAEDKEDDEDKDEDEEDEEDKEEDEEEDV. The Prevents secretion from ER signature appears at 414-417; that stretch reads KDEL.

Belongs to the calreticulin family. Monomer. Component of an EIF2 complex at least composed of CELF1/CUGBP1, CALR, CALR3, EIF2S1, EIF2S2, HSP90B1 and HSPA5. Interacts with PDIA3/ERp57 and SPACA9. Interacts with TRIM21. Interacts with NR3C1. Interacts with PPIB. Interacts (via P-domain) with PDIA5. Interacts with GABARAP. Interacts with HLA-E-B2M and HLA-G-B2M complexes. Interacts with HLA-F. Interacts with CLCC1.

It localises to the endoplasmic reticulum lumen. The protein localises to the cytoplasm. Its subcellular location is the cytosol. The protein resides in the secreted. It is found in the extracellular space. It localises to the extracellular matrix. The protein localises to the cell surface. Its subcellular location is the sarcoplasmic reticulum lumen. The protein resides in the cytoplasmic vesicle. It is found in the secretory vesicle. It localises to the cortical granule. The protein localises to the cytolytic granule. Calcium-binding chaperone that promotes folding, oligomeric assembly and quality control in the endoplasmic reticulum (ER) via the calreticulin/calnexin cycle. This lectin interacts transiently with almost all of the monoglucosylated glycoproteins that are synthesized in the ER. Interacts with the DNA-binding domain of NR3C1 and mediates its nuclear export. Involved in maternal gene expression regulation. May participate in oocyte maturation via the regulation of calcium homeostasis. Present in the cortical granules of non-activated oocytes, is exocytosed during the cortical reaction in response to oocyte activation and might participate in the block to polyspermy. In Homo sapiens (Human), this protein is Calreticulin.